A 293-amino-acid polypeptide reads, in one-letter code: Glutamyl-Q tRNA(Asp) synthetase (293 aa).

L-glutamate is bound by residues 8 to 12 and glutamate 44; that span reads RFAPT. The 'HIGH' region signature appears at 11 to 21; it reads PTPSGYLHFGS. Zn(2+) is bound by residues cysteine 100, cysteine 102, tyrosine 114, and cysteine 118. Positions 171 and 189 each coordinate L-glutamate. The 'KMSKS' region signature appears at 227 to 231; the sequence is KLGKS. Lysine 230 is an ATP binding site.

This sequence belongs to the class-I aminoacyl-tRNA synthetase family. GluQ subfamily. The cofactor is Zn(2+).

Its function is as follows. Catalyzes the tRNA-independent activation of glutamate in presence of ATP and the subsequent transfer of glutamate onto a tRNA(Asp). Glutamate is transferred on the 2-amino-5-(4,5-dihydroxy-2-cyclopenten-1-yl) moiety of the queuosine in the wobble position of the QUC anticodon. This Pseudomonas aeruginosa (strain LESB58) protein is Glutamyl-Q tRNA(Asp) synthetase.